An 83-amino-acid chain; its full sequence is Non-muscle caldesmon (83 aa).

Basic and acidic residues-rich tracts occupy residues 1–44 (QTSE…KEEK) and 62–76 (NQLKDEKTKKDKESK). The myosin and calmodulin-binding stretch occupies residues 1–63 (QTSEKEGRSE…PKPGSIEENQ (63 aa)). Residues 1–83 (QTSEKEGRSE…ESKNILSLCL (83 aa)) form a disordered region.

In terms of processing, in non-muscle cells, phosphorylation by CDC2 during mitosis causes caldesmon to dissociate from microfilaments. Phosphorylation reduces caldesmon binding to actin, myosin, and calmodulin as well as its inhibition of actomyosin ATPase activity. Phosphorylation also occurs in both quiescent and dividing smooth muscle cells with similar effects on the interaction with actin and calmodulin and on microfilaments reorganization.

Its subcellular location is the cytoplasm. It is found in the cytoskeleton. The protein resides in the myofibril. It localises to the stress fiber. Its function is as follows. Actin- and myosin-binding protein implicated in the regulation of actomyosin interactions in smooth muscle and nonmuscle cells (could act as a bridge between myosin and actin filaments). Stimulates actin binding of tropomyosin which increases the stabilization of actin filament structure. In muscle tissues, inhibits the actomyosin ATPase by binding to F-actin. This inhibition is attenuated by calcium-calmodulin and is potentiated by tropomyosin. Interacts with actin, myosin, two molecules of tropomyosin and with calmodulin. Also plays an essential role during cellular mitosis and receptor capping. The protein is Non-muscle caldesmon (CALD1) of Bos taurus (Bovine).